Here is a 256-residue protein sequence, read N- to C-terminus: Thiazole synthase (256 aa).

Residue Lys95 is the Schiff-base intermediate with DXP of the active site. 1-deoxy-D-xylulose 5-phosphate is bound by residues Gly156, 182–183 (AG), and 204–205 (NT).

The protein belongs to the ThiG family. In terms of assembly, homotetramer. Forms heterodimers with either ThiH or ThiS.

It is found in the cytoplasm. It carries out the reaction [ThiS sulfur-carrier protein]-C-terminal-Gly-aminoethanethioate + 2-iminoacetate + 1-deoxy-D-xylulose 5-phosphate = [ThiS sulfur-carrier protein]-C-terminal Gly-Gly + 2-[(2R,5Z)-2-carboxy-4-methylthiazol-5(2H)-ylidene]ethyl phosphate + 2 H2O + H(+). It participates in cofactor biosynthesis; thiamine diphosphate biosynthesis. Catalyzes the rearrangement of 1-deoxy-D-xylulose 5-phosphate (DXP) to produce the thiazole phosphate moiety of thiamine. Sulfur is provided by the thiocarboxylate moiety of the carrier protein ThiS. In vitro, sulfur can be provided by H(2)S. The sequence is that of Thiazole synthase from Enterobacter sp. (strain 638).